The following is a 1077-amino-acid chain: Zinc finger protein 518B (1077 aa).

Residues Tyr-9–Ala-30 show a composition bias toward polar residues. The segment at Tyr-9–Arg-35 is disordered. C2H2-type zinc fingers lie at residues Phe-160–His-182 and Tyr-188–His-211. Positions Thr-372 to Ser-397 are disordered. A Glycyl lysine isopeptide (Lys-Gly) (interchain with G-Cter in SUMO2) cross-link involves residue Lys-479. Disordered regions lie at residues Leu-561–Ser-585, Gly-599–Gly-622, Lys-675–Gln-739, and Gln-825–Asp-852. Basic and acidic residues predominate over residues Ser-564 to Glu-574. Polar residues-rich tracts occupy residues Ser-605–Ala-621 and Lys-675–Ser-688. Glycyl lysine isopeptide (Lys-Gly) (interchain with G-Cter in SUMO2) cross-links involve residues Lys-847 and Lys-861. Residues Gln-895–Lys-914 form a disordered region. A C2H2-type 3 zinc finger spans residues Phe-1039–His-1061.

It belongs to the krueppel C2H2-type zinc-finger protein family.

The protein localises to the nucleus. Its function is as follows. Through its association with the EHMT1-EHMT2/G9A and PRC2/EED-EZH2 histone methyltransferase complexes may function in gene silencing, regulating repressive post-translational methylation of histone tails at promoters of target genes. This chain is Zinc finger protein 518B (Znf518b), found in Mus musculus (Mouse).